A 167-amino-acid polypeptide reads, in one-letter code: Endoribonuclease YbeY (167 aa).

Zn(2+)-binding residues include His-131, His-135, and His-141.

It belongs to the endoribonuclease YbeY family. It depends on Zn(2+) as a cofactor.

The protein resides in the cytoplasm. Functionally, single strand-specific metallo-endoribonuclease involved in late-stage 70S ribosome quality control and in maturation of the 3' terminus of the 16S rRNA. This Rickettsia africae (strain ESF-5) protein is Endoribonuclease YbeY.